The sequence spans 276 residues: Octanoyltransferase LipM (276 aa).

The region spanning 32-247 (GEVAPTLRFY…GFEDALQLTF (216 aa)) is the BPL/LPL catalytic domain. The Acyl-thioester intermediate role is filled by cysteine 149.

The protein belongs to the octanoyltransferase LipM family. Monomer.

It catalyses the reaction octanoyl-[ACP] + L-lysyl-[protein] = N(6)-octanoyl-L-lysyl-[protein] + holo-[ACP] + H(+). Its pathway is protein modification; protein lipoylation via endogenous pathway; protein N(6)-(lipoyl)lysine from octanoyl-[acyl-carrier-protein]. In terms of biological role, catalyzes the transfer of endogenously produced octanoic acid from octanoyl-acyl-carrier-protein onto the lipoyl domain of GcvH, an intermediate carrier during protein lipoylation. The polypeptide is Octanoyltransferase LipM (Exiguobacterium sibiricum (strain DSM 17290 / CCUG 55495 / CIP 109462 / JCM 13490 / 255-15)).